The primary structure comprises 480 residues: 6-phosphogluconate dehydrogenase, decarboxylating (480 aa).

NADP(+)-binding positions include 11 to 16, 34 to 36, 76 to 78, and asparagine 104; these read GLAVMG, NRS, and IKA. Residues asparagine 104 and 130–132 contribute to the substrate site; that span reads SGG. The Proton acceptor role is filled by lysine 184. A substrate-binding site is contributed by 187-188; that stretch reads HN. Residue glutamate 191 is the Proton donor of the active site. Substrate is bound by residues tyrosine 192, lysine 261, arginine 288, arginine 448, and histidine 454.

The protein belongs to the 6-phosphogluconate dehydrogenase family. In terms of assembly, homodimer.

It carries out the reaction 6-phospho-D-gluconate + NADP(+) = D-ribulose 5-phosphate + CO2 + NADPH. It participates in carbohydrate degradation; pentose phosphate pathway; D-ribulose 5-phosphate from D-glucose 6-phosphate (oxidative stage): step 3/3. Catalyzes the oxidative decarboxylation of 6-phosphogluconate to ribulose 5-phosphate and CO(2), with concomitant reduction of NADP to NADPH. In Chlamydia trachomatis serovar D (strain ATCC VR-885 / DSM 19411 / UW-3/Cx), this protein is 6-phosphogluconate dehydrogenase, decarboxylating (gnd).